Reading from the N-terminus, the 126-residue chain is Large ribosomal subunit protein bL20c (126 aa).

This sequence belongs to the bacterial ribosomal protein bL20 family.

The protein localises to the plastid. It is found in the chloroplast. In terms of biological role, binds directly to 23S ribosomal RNA and is necessary for the in vitro assembly process of the 50S ribosomal subunit. It is not involved in the protein synthesizing functions of that subunit. The protein is Large ribosomal subunit protein bL20c of Guizotia abyssinica (Niger).